Here is a 475-residue protein sequence, read N- to C-terminus: Protein nucleotidyltransferase YdiU (475 aa).

Residues Gly-82, Gly-84, Arg-85, Lys-105, Asp-117, Gly-118, Arg-168, and Arg-175 each coordinate ATP. Asp-240 acts as the Proton acceptor in catalysis. Mg(2+)-binding residues include Asn-241 and Asp-250. Asp-250 lines the ATP pocket.

The protein belongs to the SELO family. The cofactor is Mg(2+). Requires Mn(2+) as cofactor.

The catalysed reaction is L-seryl-[protein] + ATP = 3-O-(5'-adenylyl)-L-seryl-[protein] + diphosphate. The enzyme catalyses L-threonyl-[protein] + ATP = 3-O-(5'-adenylyl)-L-threonyl-[protein] + diphosphate. It carries out the reaction L-tyrosyl-[protein] + ATP = O-(5'-adenylyl)-L-tyrosyl-[protein] + diphosphate. It catalyses the reaction L-histidyl-[protein] + UTP = N(tele)-(5'-uridylyl)-L-histidyl-[protein] + diphosphate. The catalysed reaction is L-seryl-[protein] + UTP = O-(5'-uridylyl)-L-seryl-[protein] + diphosphate. The enzyme catalyses L-tyrosyl-[protein] + UTP = O-(5'-uridylyl)-L-tyrosyl-[protein] + diphosphate. Nucleotidyltransferase involved in the post-translational modification of proteins. It can catalyze the addition of adenosine monophosphate (AMP) or uridine monophosphate (UMP) to a protein, resulting in modifications known as AMPylation and UMPylation. The polypeptide is Protein nucleotidyltransferase YdiU (Aeromonas hydrophila subsp. hydrophila (strain ATCC 7966 / DSM 30187 / BCRC 13018 / CCUG 14551 / JCM 1027 / KCTC 2358 / NCIMB 9240 / NCTC 8049)).